A 487-amino-acid chain; its full sequence is Bifunctional protein HldE (487 aa).

Residues 1 to 326 (MERREVESFF…QEIVAEVGHG (326 aa)) are ribokinase. 205–208 (NRKE) contributes to the ATP binding site. Asp-275 is an active-site residue. The segment at 356–487 (FTNGCFDLLH…RIIEKILSSY (132 aa)) is cytidylyltransferase.

It in the N-terminal section; belongs to the carbohydrate kinase PfkB family. In the C-terminal section; belongs to the cytidylyltransferase family. As to quaternary structure, homodimer.

It catalyses the reaction D-glycero-beta-D-manno-heptose 7-phosphate + ATP = D-glycero-beta-D-manno-heptose 1,7-bisphosphate + ADP + H(+). The enzyme catalyses D-glycero-beta-D-manno-heptose 1-phosphate + ATP + H(+) = ADP-D-glycero-beta-D-manno-heptose + diphosphate. It participates in nucleotide-sugar biosynthesis; ADP-L-glycero-beta-D-manno-heptose biosynthesis; ADP-L-glycero-beta-D-manno-heptose from D-glycero-beta-D-manno-heptose 7-phosphate: step 1/4. It functions in the pathway nucleotide-sugar biosynthesis; ADP-L-glycero-beta-D-manno-heptose biosynthesis; ADP-L-glycero-beta-D-manno-heptose from D-glycero-beta-D-manno-heptose 7-phosphate: step 3/4. Its function is as follows. Catalyzes the phosphorylation of D-glycero-D-manno-heptose 7-phosphate at the C-1 position to selectively form D-glycero-beta-D-manno-heptose-1,7-bisphosphate. Catalyzes the ADP transfer from ATP to D-glycero-beta-D-manno-heptose 1-phosphate, yielding ADP-D-glycero-beta-D-manno-heptose. The sequence is that of Bifunctional protein HldE from Citrifermentans bemidjiense (strain ATCC BAA-1014 / DSM 16622 / JCM 12645 / Bem) (Geobacter bemidjiensis).